Consider the following 167-residue polypeptide: MKMMVVFLFSILLVFGFVAFASKPSPVYGGLSLVVSGGLGCAIVVSLEDVFLGLIVFLIYLGGMLVVFGYTAAMATEEYPESWVGNTVALSMLLFTVIVESAWYLMSGEVKVSMDIELFDIIGGYCVGQDYSGVSLLYGCGGWALVLLGWILFITIYVVLEVVRGCN.

The next 5 helical transmembrane spans lie at 1–21, 27–47, 50–70, 88–108, and 143–163; these read MKMM…VAFA, VYGG…VVSL, VFLG…VFGY, VALS…LMSG, and WALV…LEVV.

This sequence belongs to the complex I subunit 6 family. Core subunit of respiratory chain NADH dehydrogenase (Complex I) which is composed of 45 different subunits.

It localises to the mitochondrion inner membrane. The enzyme catalyses a ubiquinone + NADH + 5 H(+)(in) = a ubiquinol + NAD(+) + 4 H(+)(out). Functionally, core subunit of the mitochondrial membrane respiratory chain NADH dehydrogenase (Complex I) which catalyzes electron transfer from NADH through the respiratory chain, using ubiquinone as an electron acceptor. Essential for the catalytic activity and assembly of complex I. This is NADH-ubiquinone oxidoreductase chain 6 (MT-ND6) from Osphranter robustus (Wallaroo).